Consider the following 568-residue polypeptide: Probable asparagine--tRNA ligase, cytoplasmic (568 aa).

Belongs to the class-II aminoacyl-tRNA synthetase family.

The protein localises to the cytoplasm. It catalyses the reaction tRNA(Asn) + L-asparagine + ATP = L-asparaginyl-tRNA(Asn) + AMP + diphosphate + H(+). In terms of biological role, cytosolic asparaginyl-tRNA synthetase which catalyzes the specific attachment of asparagine to its cognate tRNA. The sequence is that of Probable asparagine--tRNA ligase, cytoplasmic (nrs1) from Schizosaccharomyces pombe (strain 972 / ATCC 24843) (Fission yeast).